Here is a 392-residue protein sequence, read N- to C-terminus: ATP phosphoribosyltransferase regulatory subunit (392 aa).

It belongs to the class-II aminoacyl-tRNA synthetase family. HisZ subfamily. Heteromultimer composed of HisG and HisZ subunits.

It is found in the cytoplasm. It functions in the pathway amino-acid biosynthesis; L-histidine biosynthesis; L-histidine from 5-phospho-alpha-D-ribose 1-diphosphate: step 1/9. Its function is as follows. Required for the first step of histidine biosynthesis. May allow the feedback regulation of ATP phosphoribosyltransferase activity by histidine. In Synechococcus sp. (strain CC9902), this protein is ATP phosphoribosyltransferase regulatory subunit.